A 406-amino-acid polypeptide reads, in one-letter code: Acetamidase (406 aa).

Positions Cys387–Arg399 are enriched in low complexity. The segment at Cys387–Arg406 is disordered.

The protein belongs to the acetamidase/formamidase family.

The enzyme catalyses a monocarboxylic acid amide + H2O = a monocarboxylate + NH4(+). The catalysed reaction is acetamide + H2O = acetate + NH4(+). Functionally, allows acetamide to be used as a sole carbon or nitrogen source. The chain is Acetamidase (amdA) from Mycolicibacterium smegmatis (Mycobacterium smegmatis).